Here is a 41-residue protein sequence, read N- to C-terminus: Photosystem II reaction center protein Y (41 aa).

Met1 carries the post-translational modification N-formylmethionine. The Lumenal portion of the chain corresponds to 1–4; it reads MDWR. The helical transmembrane segment at 5–23 threads the bilayer; sequence VLVVLLPVLLAAGWAVRNI. Topologically, residues 24 to 41 are cytoplasmic; the sequence is LPYAVKQVQKLLQKAKAA.

Belongs to the PsbY family. PSII is composed of 1 copy each of membrane proteins PsbA, PsbB, PsbC, PsbD, PsbE, PsbF, PsbH, PsbI, PsbJ, PsbK, PsbL, PsbM, PsbT, PsbX, PsbY, PsbZ, Psb30/Ycf12, peripheral proteins PsbO, CyanoQ (PsbQ), PsbU, PsbV and a large number of cofactors. It forms dimeric complexes. This protein is only loosely associated with PSII, and is not often found in crystals. Found on the exterior of the PSII dimer, near cytochrome b559 (psbE and psbF). The cofactor is PSII binds multiple chlorophylls, carotenoids and specific lipids..

It localises to the cellular thylakoid membrane. In terms of biological role, loosely associated component of the core of photosystem II, it is not always seen in crystals. PSII is a light-driven water plastoquinone oxidoreductase, using light energy to abstract electrons from H(2)O, generating a proton gradient subsequently used for ATP formation. The polypeptide is Photosystem II reaction center protein Y (Thermosynechococcus vestitus (strain NIES-2133 / IAM M-273 / BP-1)).